The chain runs to 643 residues: Fructose-1,6-bisphosphatase class 3 (643 aa).

Belongs to the FBPase class 3 family. Mn(2+) serves as cofactor.

The catalysed reaction is beta-D-fructose 1,6-bisphosphate + H2O = beta-D-fructose 6-phosphate + phosphate. It functions in the pathway carbohydrate biosynthesis; gluconeogenesis. This chain is Fructose-1,6-bisphosphatase class 3, found in Lacticaseibacillus casei (strain BL23) (Lactobacillus casei).